We begin with the raw amino-acid sequence, 478 residues long: Dynein regulatory complex subunit 4 (478 aa).

Over residues 1 to 12 (MAPKKKGKKGKA) the composition is skewed to basic residues. Positions 1 to 29 (MAPKKKGKKGKAKGTAIVDGVAPEDMTKE) are disordered. Residues 1 to 114 (MAPKKKGKKG…LLYEHQNNLA (114 aa)) are regulates microtubule-binding. 2 coiled-coil regions span residues 24–207 (EDMT…RKTE) and 242–426 (LNNL…ELAR). The tract at residues 115–258 (EVKAEGTVVM…NSLKEQMEDM (144 aa)) is microtubule-binding. The interaction with SMO stretch occupies residues 357–478 (QQKTGFKNLL…GPAGLVGAPT (122 aa)).

Belongs to the DRC4 family. Component of the nexin-dynein regulatory complex (N-DRC). Interacts with microtubules. Interacts with SMO. Interacts (via coiled-coil domains) with RAB3B (in GTP-bound form). Interacts with DRC1. Interacts with DRC7. In terms of tissue distribution, highly expressed in adult testes and lung. Weakly or not expressed in other tested tissues.

The protein resides in the cytoplasm. The protein localises to the cytoskeleton. It is found in the cell projection. It localises to the cilium. Its subcellular location is the flagellum. The protein resides in the cilium axoneme. The protein localises to the cilium basal body. It is found in the golgi apparatus. It localises to the flagellum axoneme. In terms of biological role, component of the nexin-dynein regulatory complex (N-DRC), a key regulator of ciliary/flagellar motility which maintains the alignment and integrity of the distal axoneme and regulates microtubule sliding in motile axonemes. Plays an important role in the assembly of the N-DRC linker. Plays dual roles at both the primary (or non-motile) cilia to regulate hedgehog signaling and in motile cilia to coordinate cilia movement. Required for proper motile cilia functioning. Positively regulates ciliary smoothened (SMO)-dependent Hedgehog (Hh) signaling pathway by facilitating the trafficking of SMO into the cilium and the stimulation of SMO activity in a GRK2-dependent manner. May play a role in the spermatozoa motility. The sequence is that of Dynein regulatory complex subunit 4 (Gas8) from Mus musculus (Mouse).